A 254-amino-acid polypeptide reads, in one-letter code: Phosphatidylglycerol--prolipoprotein diacylglyceryl transferase (254 aa).

Helical transmembrane passes span 11–31 (LAIRWYGVIISIGAALGLLLA), 49–69 (FLIAFPSAIIGARLYYVIFEF), and 84–104 (QGGLAIHGGIIFGVLAVYIYL). Arginine 130 lines the a 1,2-diacyl-sn-glycero-3-phospho-(1'-sn-glycerol) pocket. Transmembrane regions (helical) follow at residues 169 to 189 (PTFLYESIWNFIVCIFLVYLL), 196 to 216 (GIVFMAYIGLYSLGRFFIEGL), and 228 to 248 (VAQLISVLGIILSIFFIYNII).

This sequence belongs to the Lgt family.

It is found in the cell membrane. The enzyme catalyses L-cysteinyl-[prolipoprotein] + a 1,2-diacyl-sn-glycero-3-phospho-(1'-sn-glycerol) = an S-1,2-diacyl-sn-glyceryl-L-cysteinyl-[prolipoprotein] + sn-glycerol 1-phosphate + H(+). The protein operates within protein modification; lipoprotein biosynthesis (diacylglyceryl transfer). Functionally, catalyzes the transfer of the diacylglyceryl group from phosphatidylglycerol to the sulfhydryl group of the N-terminal cysteine of a prolipoprotein, the first step in the formation of mature lipoproteins. In Clostridium botulinum (strain Loch Maree / Type A3), this protein is Phosphatidylglycerol--prolipoprotein diacylglyceryl transferase.